Consider the following 103-residue polypeptide: Large ribosomal subunit protein bL21 (103 aa).

Belongs to the bacterial ribosomal protein bL21 family. In terms of assembly, part of the 50S ribosomal subunit. Contacts protein L20.

This protein binds to 23S rRNA in the presence of protein L20. The polypeptide is Large ribosomal subunit protein bL21 (Variovorax paradoxus (strain S110)).